Here is a 669-residue protein sequence, read N- to C-terminus: Potassium voltage-gated channel subfamily KQT member 1 (669 aa).

The Cytoplasmic portion of the chain corresponds to 1-120; sequence MDTASSPPNA…YNFLERPTGW (120 aa). Serine 27 carries the phosphoserine; by PKA modification. A helical transmembrane segment spans residues 121 to 142; it reads KCFVYHFTVFLIVLVCLIFSVL. Residues 143 to 153 are Extracellular-facing; the sequence is STIEQYAALAT. The helical transmembrane segment at 154-176 threads the bilayer; the sequence is GTLFWMEIVLVVFFGTEYVVRLW. Residues 177–192 are Cytoplasmic-facing; the sequence is SAGCRSKYVGIWGRLR. The helical transmembrane segment at 193–218 threads the bilayer; sequence FARKPISIIDLIVVVASMVVLCVGSK. The Extracellular portion of the chain corresponds to 219-226; sequence GQVFATSA. A helical; Voltage-sensor membrane pass occupies residues 227–242; it reads IRGIRFLQILRMLHVD. Residues 238–246 form an interaction with KCNE3 region; that stretch reads MLHVDRQGG. Topologically, residues 243–260 are cytoplasmic; that stretch reads RQGGTWRLLGSVVFIHRQ. A 1,2-diacyl-sn-glycero-3-phospho-(1D-myo-inositol-4,5-bisphosphate) is bound at residue glutamine 244. Residues 261 to 283 traverse the membrane as a helical segment; the sequence is ELITTLYIGFLGLIFSSYFVYLA. Over 284–299 the chain is Extracellular; the sequence is EKDAVNESGRIEFGSY. An N-linked (GlcNAc...) asparagine glycan is attached at asparagine 289. Residues 300–320 constitute an intramembrane region (pore-forming); sequence ADALWWGVVTVTTIGYGDKVP. Residues 321 to 322 are Extracellular-facing; sequence QT. Residues 323–348 form a helical membrane-spanning segment; that stretch reads WVGKTIASCFSVFAISFFALPAGILG. Residues 349-669 are Cytoplasmic-facing; it reads SGFALKVQQK…VPQTGPDEGS (321 aa). The interval 370 to 382 is interaction with CALM; the sequence is AAASLIQTAWRCY. Phosphoserine is present on residues serine 407 and serine 409. An interaction with CALM; calcium-dependent region spans residues 515-529; that stretch reads KVIRRMQYFVAKKKF. The interval 535 to 572 is interaction with KCNE1 C-terminus; sequence PYDVRDVIEQYSQGHLNLMVRIKELQRRLDQSIGKPSL. The stretch at 585 to 621 forms a coiled coil; it reads SNTIGARLNRVEDKVTQLDQRLVIITDMLHQLLSLQQ. The segment at 588–616 is interaction with AKAP9; it reads IGARLNRVEDKVTQLDQRLVIITDMLHQL. Residues 589–620 are C-terminal assembly domain (tetramerization); that stretch reads GARLNRVEDKVTQLDQRLVIITDMLHQLLSLQ.

Belongs to the potassium channel family. KQT (TC 1.A.1.15) subfamily. Kv7.1/KCNQ1 sub-subfamily. As to quaternary structure, tetramer. Heterotetramer with KCNE1; targets to the membrane raft. Interacts (via C-terminus) with CALM; forms a heterooctameric structure (with 4:4 KCNQ1:CALM stoichiometry) in a calcium-independent manner. Interacts with AKAP9; targets protein kinase A (PKA) catalytic and regulatory subunits and protein phosphatase 1 (PP1) to the KCNQ1-KCNE1 complex, allowing PKA-mediated phosphorylation and increase of delayed rectifier potassium channel activity. Interacts with KCNE2; form a heterooligomer complex that targets to the membrane raft and leading to currents with an apparently instantaneous activation, a rapid deactivation process and a linear current-voltage relationship and decreases the amplitude of the outward current. Interacts with AP2M1; mediates estrogen-induced internalization via clathrin-coated vesicles. Interacts with NEDD4L; promotes internalization and decreases I(Ks) currents. Interacts with USP2; counteracts the NEDD4L-specific down-regulation of I(Ks) and restore plasma membrane localization. Heterotetramer with KCNQ5; has a voltage-gated potassium channel activity. Interacts with KCNE3; produces a current with nearly instantaneous activation with a linear current-voltage relationship and alters membrane raft localization. Interacts with KCNE4; impairs KCNQ1 localization in lipid rafts and inhibits voltage-gated potassium channel activity. Interacts with KCNE5; impairs KCNQ1 localization in lipid rafts and only conducts current upon strong and continued depolarization. Interacts with SLC5A3; forms coregulatory channel-transporter complexes that modulate Na(+)-coupled myo-inositol influx through the transporter. In terms of processing, phosphorylation at Ser-27 by PKA; increases delayed rectifier potassium channel activity of the KCNQ1-KCNE1 complex through a macromolecular complex that includes PKA, PP1, and the targeting protein AKAP9. Ubiquitinated by NEDD4L; promotes internalization. The ubiquitinylated form is internalized through a clathrin-mediated endocytosis by interacting with AP2M1 and is recycled back to the cell membrane via RAB4A and RAB11A. Post-translationally, deubiquitinated by USP2; counteracts the NEDD4L-specific down-regulation of I(Ks) and restores the membrane localization.

It localises to the cell membrane. The protein localises to the cytoplasmic vesicle membrane. The protein resides in the early endosome. Its subcellular location is the membrane raft. It is found in the endoplasmic reticulum. It localises to the basolateral cell membrane. The protein localises to the apical cell membrane. It carries out the reaction K(+)(in) = K(+)(out). Its activity is regulated as follows. PIP2 molecule is essential to activate KCNQ channels by inducing the coupling of the voltage-sensing domain (VSD) and the pore-forming domain (PD). Upon channel activation, PIP2 disrupts the VSD-calmodulin/CALM interactions, causing the release of CALM from the VSD which triggers the opening of the gate. Calcium potentiates KCNQ1 channel current through calcium-bound CALM. Calcium-bound CALM competes with PIP2 to stabilize the channel open state. Its function is as follows. Pore-forming subunit of the voltage-gated potassium (Kv) channel involved in the regulation of cardiomyocyte excitability and important in normal development and functions of myocardium, inner ear, stomach and colon. Associates with KCNE beta subunits that modulates current kinetics. Induces a voltage-dependent by rapidly activating and slowly deactivating potassium-selective outward current. Also promotes a delayed voltage activated potassium current showing outward rectification characteristic. During beta-adrenergic receptor stimulation participates in cardiac repolarization by associating with KCNE1 to form the I(Ks) cardiac potassium current that increases the amplitude and slows down the activation kinetics of outward potassium current I(Ks). Muscarinic agonist oxotremorine-M strongly suppresses KCNQ1/KCNE1 current. When associated with KCNE3, forms the potassium channel that is important for cyclic AMP-stimulated intestinal secretion of chloride ions. This interaction with KCNE3 is reduced by 17beta-estradiol, resulting in the reduction of currents. During conditions of increased substrate load, maintains the driving force for proximal tubular and intestinal sodium ions absorption, gastric acid secretion, and cAMP-induced jejunal chloride ions secretion. Allows the provision of potassium ions to the luminal membrane of the secretory canaliculus in the resting state as well as during stimulated acid secretion. When associated with KCNE2, forms a heterooligomer complex leading to currents with an apparently instantaneous activation, a rapid deactivation process and a linear current-voltage relationship and decreases the amplitude of the outward current. When associated with KCNE4, inhibits voltage-gated potassium channel activity. When associated with KCNE5, this complex only conducts current upon strong and continued depolarization. Also forms a heterotetramer with KCNQ5 that has a voltage-gated potassium channel activity. Binds with phosphatidylinositol 4,5-bisphosphate. KCNQ1-KCNE2 channel associates with Na(+)-coupled myo-inositol symporter in the apical membrane of choroid plexus epithelium and regulates the myo-inositol gradient between blood and cerebrospinal fluid with an impact on neuron excitability. This Rattus norvegicus (Rat) protein is Potassium voltage-gated channel subfamily KQT member 1.